The sequence spans 133 residues: Large ribosomal subunit protein bL17 (133 aa).

The protein belongs to the bacterial ribosomal protein bL17 family. As to quaternary structure, part of the 50S ribosomal subunit. Contacts protein L32.

This Verminephrobacter eiseniae (strain EF01-2) protein is Large ribosomal subunit protein bL17.